A 319-amino-acid polypeptide reads, in one-letter code: Putative metal ion transporter YfjQ (319 aa).

2 helical membrane-spanning segments follow: residues 254–274 (IMMT…IAGV) and 290–310 (GYFA…IWFV).

It belongs to the CorA metal ion transporter (MIT) (TC 1.A.35) family.

Its subcellular location is the cell membrane. This is Putative metal ion transporter YfjQ (yfjQ) from Bacillus subtilis (strain 168).